Reading from the N-terminus, the 213-residue chain is Na(+)-translocating NADH-quinone reductase subunit D (213 aa).

The next 6 membrane-spanning stretches (helical) occupy residues 21–41 (PLIA…VNTA), 42–62 (ITMG…VSLL), 69–86 (SVRM…VIVI), 101–121 (LSVF…AESL), 131–151 (FLDG…VSIV), and 183–203 (FGLM…IWGV).

This sequence belongs to the NqrDE/RnfAE family. In terms of assembly, composed of six subunits; NqrA, NqrB, NqrC, NqrD, NqrE and NqrF.

It localises to the cell inner membrane. It catalyses the reaction a ubiquinone + n Na(+)(in) + NADH + H(+) = a ubiquinol + n Na(+)(out) + NAD(+). Its function is as follows. NQR complex catalyzes the reduction of ubiquinone-1 to ubiquinol by two successive reactions, coupled with the transport of Na(+) ions from the cytoplasm to the periplasm. NqrA to NqrE are probably involved in the second step, the conversion of ubisemiquinone to ubiquinol. This chain is Na(+)-translocating NADH-quinone reductase subunit D, found in Chlamydia caviae (strain ATCC VR-813 / DSM 19441 / 03DC25 / GPIC) (Chlamydophila caviae).